The sequence spans 296 residues: Ribosomal protein L11 methyltransferase (296 aa).

S-adenosyl-L-methionine contacts are provided by Thr139, Gly163, Asp185, and Asn232.

This sequence belongs to the methyltransferase superfamily. PrmA family.

The protein localises to the cytoplasm. The catalysed reaction is L-lysyl-[protein] + 3 S-adenosyl-L-methionine = N(6),N(6),N(6)-trimethyl-L-lysyl-[protein] + 3 S-adenosyl-L-homocysteine + 3 H(+). In terms of biological role, methylates ribosomal protein L11. This chain is Ribosomal protein L11 methyltransferase, found in Picosynechococcus sp. (strain ATCC 27264 / PCC 7002 / PR-6) (Agmenellum quadruplicatum).